The primary structure comprises 345 residues: N-acetyl-gamma-glutamyl-phosphate reductase (345 aa).

Residue Cys149 is part of the active site.

This sequence belongs to the NAGSA dehydrogenase family. Type 1 subfamily.

The protein localises to the cytoplasm. The catalysed reaction is N-acetyl-L-glutamate 5-semialdehyde + phosphate + NADP(+) = N-acetyl-L-glutamyl 5-phosphate + NADPH + H(+). It functions in the pathway amino-acid biosynthesis; L-arginine biosynthesis; N(2)-acetyl-L-ornithine from L-glutamate: step 3/4. In terms of biological role, catalyzes the NADPH-dependent reduction of N-acetyl-5-glutamyl phosphate to yield N-acetyl-L-glutamate 5-semialdehyde. The sequence is that of N-acetyl-gamma-glutamyl-phosphate reductase from Geobacillus sp. (strain WCH70).